The sequence spans 238 residues: Ubiquinone biosynthesis O-methyltransferase (238 aa).

Residues Arg-40, Gly-59, Asp-81, and Met-126 each contribute to the S-adenosyl-L-methionine site.

Belongs to the methyltransferase superfamily. UbiG/COQ3 family.

The enzyme catalyses a 3-demethylubiquinol + S-adenosyl-L-methionine = a ubiquinol + S-adenosyl-L-homocysteine + H(+). The catalysed reaction is a 3-(all-trans-polyprenyl)benzene-1,2-diol + S-adenosyl-L-methionine = a 2-methoxy-6-(all-trans-polyprenyl)phenol + S-adenosyl-L-homocysteine + H(+). The protein operates within cofactor biosynthesis; ubiquinone biosynthesis. Functionally, O-methyltransferase that catalyzes the 2 O-methylation steps in the ubiquinone biosynthetic pathway. This chain is Ubiquinone biosynthesis O-methyltransferase, found in Neisseria meningitidis serogroup C (strain 053442).